Here is a 263-residue protein sequence, read N- to C-terminus: uncharacterized protein (263 aa).

Residue 31–38 (GPTGSGKT) participates in ATP binding.

This sequence belongs to the CbbQ/NirQ/NorQ/GpvN family.

This is an uncharacterized protein from Staphylococcus epidermidis (strain ATCC 12228 / FDA PCI 1200).